The sequence spans 322 residues: Mas-related G-protein coupled receptor member X1 (322 aa).

The Extracellular portion of the chain corresponds to 1–31; that stretch reads MDPTISTLDTELTPINGTEETLCYKQTLSLT. Asn16 is a glycosylation site (N-linked (GlcNAc...) asparagine). The helical transmembrane segment at 32-52 threads the bilayer; it reads VLTCIVSLVGLTGNAVVLWLL. Topologically, residues 53 to 67 are cytoplasmic; it reads GCRMRRNAFSIYILN. A helical transmembrane segment spans residues 68-88; the sequence is LAAADFLFLSGRLIYSLLSFI. The Extracellular segment spans residues 89–96; it reads SIPHTISK. Residues 97–117 form a helical membrane-spanning segment; it reads ILYPVMMFSYFAGLSFLSAVS. At 118–144 the chain is on the cytoplasmic side; sequence TERCLSVLWPIWYRCHRPTHLSAVVCV. Residues 145–165 form a helical membrane-spanning segment; the sequence is LLWALSLLRSILEWMLCGFLF. The Extracellular segment spans residues 166-177; it reads SGADSAWCQTSD. The helical transmembrane segment at 178–198 threads the bilayer; it reads FITVAWLIFLCVVLCGSSLVL. Residues 199–221 are Cytoplasmic-facing; it reads LIRILCGSRKIPLTRLYVTILLT. A helical transmembrane segment spans residues 222–242; the sequence is VLVFLLCGLPFGIQFFLFLWI. The Extracellular segment spans residues 243–254; the sequence is HVDREVLFCHVH. A helical transmembrane segment spans residues 255–275; it reads LVSIFLSALNSSANPIIYFFV. The Cytoplasmic portion of the chain corresponds to 276–322; that stretch reads GSFRQRQNRQNLKLVLQRALQDASEVDEGGGQLPEEILELSGSRLEQ.

Belongs to the G-protein coupled receptor 1 family. Mas subfamily. Uniquely localized in a subset of small dorsal root and trigeminal sensory neurons.

It is found in the cell membrane. Orphan receptor. Probably involved in the function of nociceptive neurons. May regulate nociceptor function and/or development, including the sensation or modulation of pain. Potently activated by enkephalins including BAM22 (bovine adrenal medulla peptide 22) and BAM (8-22). BAM22 is the most potent compound and evoked a large and dose-dependent release of intracellular calcium in stably transfected cells. G(alpha)q proteins are involved in the calcium-signaling pathway. Activated by the antimalarial drug, chloroquine. May mediate chloroquine-induced itch, in a histamine-independent manner. The chain is Mas-related G-protein coupled receptor member X1 (MRGPRX1) from Homo sapiens (Human).